The chain runs to 446 residues: C4-dicarboxylate transport protein 2 (446 aa).

10 helical membrane passes run P7–A26, M46–G64, V77–G99, I152–E171, A192–G211, L221–I243, V291–L313, I318–I340, I353–L375, and I381–W403.

It belongs to the dicarboxylate/amino acid:cation symporter (DAACS) (TC 2.A.23) family.

The protein localises to the cell inner membrane. Functionally, responsible for the transport of dicarboxylates such as succinate, fumarate, and malate from the periplasm across the membrane. In Ralstonia nicotianae (strain ATCC BAA-1114 / GMI1000) (Ralstonia solanacearum), this protein is C4-dicarboxylate transport protein 2 (dctA2).